The sequence spans 200 residues: Snake venom metalloproteinase rhomb-I (200 aa).

In terms of domain architecture, Peptidase M12B spans 4-200 (KYIELVVVAD…RKPQCILNKP (197 aa)). Ca(2+) contacts are provided by Glu-7 and Asp-91. 3 cysteine pairs are disulfide-bonded: Cys-115–Cys-195, Cys-155–Cys-179, and Cys-157–Cys-162. Residue His-140 participates in Zn(2+) binding. The active site involves Glu-141. Residues His-144 and His-150 each coordinate Zn(2+). Ca(2+) contacts are provided by Cys-195 and Asn-198.

As to quaternary structure, monomer. Zn(2+) serves as cofactor. In terms of tissue distribution, expressed by the venom gland.

The protein localises to the secreted. Functionally, snake venom zinc metalloproteinase that induces hemorrhage. This Lachesis muta rhombeata (Bushmaster) protein is Snake venom metalloproteinase rhomb-I.